Here is a 343-residue protein sequence, read N- to C-terminus: Probable potassium channel protein 2 (343 aa).

Over 1–7 (METSKKL) the chain is Cytoplasmic. Residues 8–28 (VIVAVLSITLILTYAYLISII) form a helical membrane-spanning segment. Residues 29–61 (EGVDYFTALYFSVITITTTGYGDFTPKTFLGRT) lie on the Extracellular side of the membrane. The Selectivity filter signature appears at 46-51 (TTGYGD). The chain crosses the membrane as a helical span at residues 62 to 82 (LTVVYLCVGVGIVMYLFSLIA). The Cytoplasmic portion of the chain corresponds to 83–343 (EFIVEGKFEE…NLVKKKKKKL (261 aa)). Positions 107 to 227 (KDHYIICGYG…KIAGANRVVS (121 aa)) constitute an RCK N-terminal domain. In terms of domain architecture, RCK C-terminal spans 253–338 (IKIAKDEYEE…LKYLENLVKK (86 aa)).

The protein localises to the cell membrane. In terms of biological role, probable potassium channel protein. This is Probable potassium channel protein 2 from Methanocaldococcus jannaschii (strain ATCC 43067 / DSM 2661 / JAL-1 / JCM 10045 / NBRC 100440) (Methanococcus jannaschii).